Consider the following 374-residue polypeptide: uncharacterized protein (374 aa).

29–36 contributes to the ATP binding site; sequence GSLNSGKS.

The protein belongs to the archaeal ATPase family.

This is an uncharacterized protein from Methanocaldococcus jannaschii (strain ATCC 43067 / DSM 2661 / JAL-1 / JCM 10045 / NBRC 100440) (Methanococcus jannaschii).